Consider the following 449-residue polypeptide: Serine--tRNA ligase (449 aa).

An L-serine-binding site is contributed by 255–257; that stretch reads TSE. Residue 286-288 participates in ATP binding; the sequence is RSE. E309 contributes to the L-serine binding site. 373 to 376 lines the ATP pocket; that stretch reads EISS. L-serine is bound at residue S409.

This sequence belongs to the class-II aminoacyl-tRNA synthetase family. Type-1 seryl-tRNA synthetase subfamily. Homodimer. The tRNA molecule binds across the dimer.

The protein localises to the cytoplasm. It carries out the reaction tRNA(Ser) + L-serine + ATP = L-seryl-tRNA(Ser) + AMP + diphosphate + H(+). The enzyme catalyses tRNA(Sec) + L-serine + ATP = L-seryl-tRNA(Sec) + AMP + diphosphate + H(+). The protein operates within aminoacyl-tRNA biosynthesis; selenocysteinyl-tRNA(Sec) biosynthesis; L-seryl-tRNA(Sec) from L-serine and tRNA(Sec): step 1/1. Catalyzes the attachment of serine to tRNA(Ser). Is also able to aminoacylate tRNA(Sec) with serine, to form the misacylated tRNA L-seryl-tRNA(Sec), which will be further converted into selenocysteinyl-tRNA(Sec). The polypeptide is Serine--tRNA ligase (Bordetella avium (strain 197N)).